Reading from the N-terminus, the 275-residue chain is Formamidopyrimidine-DNA glycosylase (275 aa).

P2 functions as the Schiff-base intermediate with DNA in the catalytic mechanism. E3 acts as the Proton donor in catalysis. K58 functions as the Proton donor; for beta-elimination activity in the catalytic mechanism. The DNA site is built by H93, R111, and R156. An FPG-type zinc finger spans residues 241–275; it reads FAYDRAGLPCRVCGTPIRQIVQGQRSTYFCPTCQR. Residue R265 is the Proton donor; for delta-elimination activity of the active site.

It belongs to the FPG family. Monomer. Requires Zn(2+) as cofactor.

It catalyses the reaction Hydrolysis of DNA containing ring-opened 7-methylguanine residues, releasing 2,6-diamino-4-hydroxy-5-(N-methyl)formamidopyrimidine.. It carries out the reaction 2'-deoxyribonucleotide-(2'-deoxyribose 5'-phosphate)-2'-deoxyribonucleotide-DNA = a 3'-end 2'-deoxyribonucleotide-(2,3-dehydro-2,3-deoxyribose 5'-phosphate)-DNA + a 5'-end 5'-phospho-2'-deoxyribonucleoside-DNA + H(+). In terms of biological role, involved in base excision repair of DNA damaged by oxidation or by mutagenic agents. Acts as a DNA glycosylase that recognizes and removes damaged bases. Has a preference for oxidized purines, such as 7,8-dihydro-8-oxoguanine (8-oxoG). Has AP (apurinic/apyrimidinic) lyase activity and introduces nicks in the DNA strand. Cleaves the DNA backbone by beta-delta elimination to generate a single-strand break at the site of the removed base with both 3'- and 5'-phosphates. In Burkholderia vietnamiensis (strain G4 / LMG 22486) (Burkholderia cepacia (strain R1808)), this protein is Formamidopyrimidine-DNA glycosylase.